Reading from the N-terminus, the 165-residue chain is Disulfide bond formation protein B (165 aa).

Residues 1 to 10 are Cytoplasmic-facing; it reads MPAWLTNRTI. A helical membrane pass occupies residues 11-27; that stretch reads YFLCFLAIAGLMGFAFY. At 28–45 the chain is on the periplasmic side; that stretch reads LQYVKDLEPCPLCMAQRI. Cysteine 37 and cysteine 40 are oxidised to a cystine. The helical transmembrane segment at 46–62 threads the bilayer; that stretch reads AFVLAGLVFLAAALHNP. Over 63–68 the chain is Cytoplasmic; that stretch reads KNTGTT. A helical membrane pass occupies residues 69–86; sequence VYAFLGWVTTLGGAALAT. The Periplasmic segment spans residues 87-143; the sequence is RQLWLQSLPADQVPACGPGLEYMLEAFPFSEVLTMMLTGTGECAEVQWTFLGLSIPG. Cysteines 102 and 129 form a disulfide. A helical membrane pass occupies residues 144-162; that stretch reads WTLVAFIGFTAVWAFAWVR. Over 163-165 the chain is Cytoplasmic; it reads RPR.

This sequence belongs to the DsbB family.

The protein resides in the cell inner membrane. Its function is as follows. Required for disulfide bond formation in some periplasmic proteins. Acts by oxidizing the DsbA protein. This chain is Disulfide bond formation protein B, found in Hahella chejuensis (strain KCTC 2396).